The following is a 45-amino-acid chain: Large ribosomal subunit protein bL34 (45 aa).

Belongs to the bacterial ribosomal protein bL34 family.

This is Large ribosomal subunit protein bL34 (rpmH) from Streptomyces bikiniensis.